The following is a 515-amino-acid chain: Cytochrome P450 705A22 (515 aa).

A helical transmembrane segment spans residues 9–29 (FQNCFIFILIFLLTFLCFFFF). Cys-454 provides a ligand contact to heme.

Belongs to the cytochrome P450 family. Heme serves as cofactor.

The protein localises to the membrane. In terms of biological role, plays a role in the gravitropic response of the inflorescence stems and roots. May affect the synthesis of flavonols that have a role in regulating auxin transport. This Arabidopsis thaliana (Mouse-ear cress) protein is Cytochrome P450 705A22.